Consider the following 261-residue polypeptide: UPF0246 protein PMI0005 (261 aa).

The protein belongs to the UPF0246 family.

This chain is UPF0246 protein PMI0005, found in Proteus mirabilis (strain HI4320).